We begin with the raw amino-acid sequence, 223 residues long: MNTSTSAFDFGSSTASSAATSTTSSQPDANDHLSRLAAMTQGVGKEDPETSSTPSTEASLYPGISAAYMQSYGWPQNYNYFGQPLGPATFPGWPQCYPNTAWPNYGELFASSKKGRQTYQRYQTSVLEAKFQQSSYVSKKQREELRLQTQLTDRQIKIWFQNRRMKAKKEKQRVDDHTEHTPLLPANPPKGMGMDMDDEKKWQMAHWPPAAAHNPYQYPLCPP.

Residues 1–25 show a composition bias toward low complexity; that stretch reads MNTSTSAFDFGSSTASSAATSTTSS. 2 disordered regions span residues 1–58 and 168–191; these read MNTS…STEA and KKEKQRVDDHTEHTPLLPANPPKG. The homeobox DNA-binding region spans 112 to 171; sequence SKKGRQTYQRYQTSVLEAKFQQSSYVSKKQREELRLQTQLTDRQIKIWFQNRRMKAKKEK.

It belongs to the Abd-B homeobox family. In terms of assembly, interacts with the TCF transcription factor pop-1.

Its subcellular location is the nucleus. In terms of biological role, involved in control of cell fate and pattern formation along the anterior-posterior axis, acting mainly in the tail. Required during embryonic and postembryonic development. Essential for the determination of specific neurons, including the PLM touch neurons. Plays a role in neural fate specification in the hermaphrodite-specific neuron (HSN)/PHB neuron lineage, acting in concert with T-box protein tbx-2 and the asymmetric cell division protein ham-1. Required for male gonadal fate determination, acting in parallel with a WNT/beta-catenin pathway, perhaps by recruiting pop-1 to male-specific gonadal target genes. Involved in development of the hermaphrodite hindgut, and for the response to rectal infection by the coryneform bacterium M.nematophilum. This Caenorhabditis elegans protein is Homeobox protein egl-5.